The chain runs to 474 residues: BPI fold-containing family B member 1 (474 aa).

The first 21 residues, 1 to 21 (MAGPWIITLLCGLLGATLVQA), serve as a signal peptide directing secretion. Residues N153, N160, N263, and N400 are each glycosylated (N-linked (GlcNAc...) asparagine). C157 and C200 are oxidised to a cystine.

The protein belongs to the BPI/LBP/Plunc superfamily. Plunc family. Expressed in tongue, lung, thymus, and stomach. Expressed in epithelia of palate, anterior pharynx, trachea and upper bronchi. Expressed in distal tip of papillae in the anterior third of the tongue and in serous cells of von Ebner glands in the posterior third of the tongue. Expressed in columnar epithelium of the duodenum in embryonic gut at 16.5 dpc.

Its subcellular location is the secreted. Functionally, may play a role in innate immunity in mouth, nose and lungs. Binds bacterial lipopolysaccharide (LPS) and modulates the cellular responses to LPS. May be involved in formation of the left-right axis in the node of the developing embryo. The sequence is that of BPI fold-containing family B member 1 (Bpifb1) from Mus musculus (Mouse).